A 245-amino-acid chain; its full sequence is Ribosomal RNA small subunit methyltransferase G (245 aa).

Residues G80, F85, 103-105, 131-132, and R150 each bind S-adenosyl-L-methionine; these read DAT and AE.

Belongs to the methyltransferase superfamily. RNA methyltransferase RsmG family.

The protein localises to the cytoplasm. Its function is as follows. Specifically methylates the N7 position of a guanine in 16S rRNA. The protein is Ribosomal RNA small subunit methyltransferase G of Deinococcus geothermalis (strain DSM 11300 / CIP 105573 / AG-3a).